The sequence spans 156 residues: Small ribosomal subunit protein uS7 (156 aa).

Part of the 30S ribosomal subunit. Contacts proteins S9 and S11.

One of the primary rRNA binding proteins, it binds directly to 16S rRNA where it nucleates assembly of the head domain of the 30S subunit. Is located at the subunit interface close to the decoding center, probably blocks exit of the E-site tRNA. This chain is Small ribosomal subunit protein uS7, found in Rhodopseudomonas palustris (strain ATCC BAA-98 / CGA009).